An 802-amino-acid polypeptide reads, in one-letter code: Endoplasmin (802 aa).

A signal peptide spans 1–21 (MRALWVLGLCCVLLTFGSARA). The SRT pseudosubstrate motif motif lies at 42–44 (SRT). The N-linked (GlcNAc...) asparagine glycan is linked to asparagine 62. Serine 64 carries the phosphoserine modification. An N-linked (GlcNAc...) asparagine glycan is attached at asparagine 107. Asparagine 107, aspartate 149, and asparagine 162 together coordinate ATP. The residue at position 168 (lysine 168) is an N6-(2-hydroxyisobutyryl)lysine. Residue serine 172 is modified to Phosphoserine. An ATP-binding site is contributed by phenylalanine 199. Asparagine 217 is a glycosylation site (N-linked (GlcNAc...) asparagine). A disordered region spans residues 288–323 (TVEEPAEEEEAAKEEKEEADDEAAVEEEEEEKKPKT). Positions 289–317 (VEEPAEEEEAAKEEKEEADDEAAVEEEEE) are enriched in acidic residues. Serine 403 is modified (phosphoserine). Residue lysine 404 is modified to N6-succinyllysine. Asparagine 445 carries N-linked (GlcNAc...) asparagine glycosylation. Residue serine 447 is modified to Phosphoserine. At lysine 479 the chain carries N6-acetyllysine. 2 N-linked (GlcNAc...) asparagine glycosylation sites follow: asparagine 481 and asparagine 502. Lysine 633 bears the N6-succinyllysine mark. Residues 750–802 (DPDAKVEEEPEEEPEDTTEDTEQDEEEEMDAGTDEEEQEQEPEKKSTAEKDEL) are disordered. Positions 757-789 (EEPEEEPEDTTEDTEQDEEEEMDAGTDEEEQEQ) are enriched in acidic residues. Threonine 782 carries the post-translational modification Phosphothreonine. Over residues 790 to 802 (EPEKKSTAEKDEL) the composition is skewed to basic and acidic residues. A Prevents secretion from ER motif is present at residues 799–802 (KDEL).

The protein belongs to the heat shock protein 90 family. As to quaternary structure, homodimer; disulfide-linked. Component of an EIF2 complex at least composed of CELF1/CUGBP1, CALR, CALR3, EIF2S1, EIF2S2, HSP90B1 and HSPA5. Part of a large chaperone multiprotein complex comprising DNAJB11, HSP90B1, HSPA5, HYOU, PDIA2, PDIA4, PDIA6, PPIB, SDF2L1, UGGT1 and very small amounts of ERP29, but not, or at very low levels, CALR nor CANX. Interacts with AIMP1; regulates its retention in the endoplasmic reticulum. Hyperglycosylated form interacts with OS9; promoting its degradation by the endoplasmic reticulum associated degradation (ERAD). Interacts with CNPY3. This interaction is disrupted in the presence of ATP. Interacts with TLR4 and TLR9, but not with TLR3. Interacts with MZB1 in a calcium-dependent manner. Interacts with METTL23. Interacts with IL1B; the interaction facilitates cargo translocation into the ERGIC. Interacts with EIF2AK3. Phosphorylated by CK2. Post-translationally, N-glycosylated cotranslationally at Asn-217 by STT3A-containing OST-A complex: this glycosylation is constitutive. In response to various stress, 5 additional facultative sites (Asn-62, Asn-107, Asn-445, Asn-481 and Asn-502) can be glycosylated post-translationally by STT3B-containing OST-B complex, leading to a hyperglycosylated form that is degraded by the ER-associated degradation (ERAD) pathway. In normal conditions, the OST-A complex together with CCDC134 prevent glycosylation at facultative sites during protein folding, thereby preventing hyperglycosylation. Mechanistically, nascent HSP90B1 is tethered during translation to a specialized CCDC134-containing translocon that forms a microenvironment for its folding, in which STT3A associates with the SRT pseudosubstrate motif, and prevents access to facultative glycosylation sites until folding is completed, rendering its facultative sites inaccessible to the OST-B complex.

Its subcellular location is the endoplasmic reticulum lumen. It is found in the sarcoplasmic reticulum lumen. It localises to the melanosome. It catalyses the reaction ATP + H2O = ADP + phosphate + H(+). Functionally, ATP-dependent chaperone involved in the processing of proteins in the endoplasmic reticulum, regulating their transport. Together with MESD, acts as a modulator of the Wnt pathway by promoting the folding of LRP6, a coreceptor of the canonical Wnt pathway. When associated with CNPY3, required for proper folding of Toll-like receptors. Promotes folding and trafficking of TLR4 to the cell surface. May participate in the unfolding of cytosolic leaderless cargos (lacking the secretion signal sequence) such as the interleukin 1/IL-1 to facilitate their translocation into the ERGIC (endoplasmic reticulum-Golgi intermediate compartment) and secretion; the translocation process is mediated by the cargo receptor TMED10. The chain is Endoplasmin (HSP90B1) from Oryctolagus cuniculus (Rabbit).